Reading from the N-terminus, the 544-residue chain is MSNETLSADVVIIGAGICGSLLAHKLVRNGLSVLLLDAGPRRDRSQIVENWRNMPPDNKSQYDYATPYPSVPWAPHTNYFPDNNYLIVKGPDRTAYKQGIIKGVGGTTWHWAASSWRYLPNDFKLHSTYGVGRDYAMSYDELEPYYYEAECEMGVMGPNGEEITPSAPRQNPWPMTSMPYGYGDRTFTEIVSKLGFSNTPVPQARNSRPYDGRPQCCGNNNCMPICPIGAMYNGVYAAIKAEKLGAKIIPNAVVYAMETDAKNRITAISFYDPDKQSHRVVAKTFVIAANGIETPKLLLLAANDRNPHGIANSSDLVGRNMMDHPGIGMSFQSAEPIWAGGGSVQMSSITNFRDGDFRSEYAATQIGYNNTAQNSRAGMKALSMGLVGKKLDEEIRRRTAHGVDIYANHEVLPDPNNRLVLSKDYKDALGIPHPEVTYDVGEYVRKSAAISRQRLMDIAKAMGGTEIEMTPYFTPNNHITGGTIMGHDPRDSVVDKWLRTHDHSNLFLATGATMAASGTVNSTLTMAALSLRAADAILNDLKQG.

Position 14-30 (14-30 (GAGICGSLLAHKLVRNG)) interacts with FAD. Histidine 478 functions as the Proton acceptor in the catalytic mechanism.

Belongs to the GMC oxidoreductase family. In terms of assembly, heterotrimer composed of FdhL, FdhS and FdhC. FAD is required as a cofactor.

The protein localises to the cell membrane. The catalysed reaction is keto-D-fructose + a ubiquinone = 5-dehydro-D-fructose + a ubiquinol. Functionally, catalytic subunit of fructose dehydrogenase, an enzyme that catalyzes the oxidation of D-fructose to produce 5-keto-D-fructose. The chain is Fructose dehydrogenase large subunit (fdhL) from Gluconobacter japonicus.